Reading from the N-terminus, the 380-residue chain is Cytochrome b (380 aa).

A run of 4 helical transmembrane segments spans residues 33–53 (FGSL…FLAM), 77–98 (WLIR…YLHI), 113–133 (WNVG…GYVL), and 178–198 (FFAF…IHLI). Residues His-83 and His-97 each coordinate heme b. 2 residues coordinate heme b: His-182 and His-196. His-201 serves as a coordination point for a ubiquinone. Transmembrane regions (helical) follow at residues 226-246 (YKDL…ALFS), 288-308 (LGGV…PILH), 320-340 (FSQF…WIGG), and 347-367 (FVII…VMIP).

It belongs to the cytochrome b family. In terms of assembly, the cytochrome bc1 complex contains 3 respiratory subunits (MT-CYB, CYC1 and UQCRFS1), 2 core proteins (UQCRC1 and UQCRC2) and probably 6 low-molecular weight proteins. The cofactor is heme b.

The protein localises to the mitochondrion inner membrane. Its function is as follows. Component of the ubiquinol-cytochrome c reductase complex (complex III or cytochrome b-c1 complex) that is part of the mitochondrial respiratory chain. The b-c1 complex mediates electron transfer from ubiquinol to cytochrome c. Contributes to the generation of a proton gradient across the mitochondrial membrane that is then used for ATP synthesis. This is Cytochrome b (mt-cyb) from Paralichthys olivaceus (Bastard halibut).